Consider the following 243-residue polypeptide: DNA repair protein RecO (243 aa).

It belongs to the RecO family.

Functionally, involved in DNA repair and RecF pathway recombination. This is DNA repair protein RecO from Phenylobacterium zucineum (strain HLK1).